The following is a 130-amino-acid chain: Small ribosomal subunit protein uS9 (130 aa).

The segment at 110–130 (AKERKKYGRKGARARFQFSKR) is disordered. Over residues 111–130 (KERKKYGRKGARARFQFSKR) the composition is skewed to basic residues.

Belongs to the universal ribosomal protein uS9 family.

In Syntrophotalea carbinolica (strain DSM 2380 / NBRC 103641 / GraBd1) (Pelobacter carbinolicus), this protein is Small ribosomal subunit protein uS9.